Consider the following 275-residue polypeptide: 4-hydroxy-3-methylbut-2-enyl diphosphate reductase (275 aa).

Position 12 (C12) interacts with [4Fe-4S] cluster. (2E)-4-hydroxy-3-methylbut-2-enyl diphosphate is bound by residues H36 and H70. H36 and H70 together coordinate dimethylallyl diphosphate. Isopentenyl diphosphate contacts are provided by H36 and H70. A [4Fe-4S] cluster-binding site is contributed by C92. H120 lines the (2E)-4-hydroxy-3-methylbut-2-enyl diphosphate pocket. H120 contacts dimethylallyl diphosphate. H120 serves as a coordination point for isopentenyl diphosphate. Residue E122 is the Proton donor of the active site. (2E)-4-hydroxy-3-methylbut-2-enyl diphosphate is bound at residue T158. C186 is a binding site for [4Fe-4S] cluster. S214, S215, N216, and S258 together coordinate (2E)-4-hydroxy-3-methylbut-2-enyl diphosphate. Dimethylallyl diphosphate is bound by residues S214, S215, N216, and S258. Residues S214, S215, N216, and S258 each contribute to the isopentenyl diphosphate site.

The protein belongs to the IspH family. It depends on [4Fe-4S] cluster as a cofactor.

It catalyses the reaction isopentenyl diphosphate + 2 oxidized [2Fe-2S]-[ferredoxin] + H2O = (2E)-4-hydroxy-3-methylbut-2-enyl diphosphate + 2 reduced [2Fe-2S]-[ferredoxin] + 2 H(+). It carries out the reaction dimethylallyl diphosphate + 2 oxidized [2Fe-2S]-[ferredoxin] + H2O = (2E)-4-hydroxy-3-methylbut-2-enyl diphosphate + 2 reduced [2Fe-2S]-[ferredoxin] + 2 H(+). It functions in the pathway isoprenoid biosynthesis; dimethylallyl diphosphate biosynthesis; dimethylallyl diphosphate from (2E)-4-hydroxy-3-methylbutenyl diphosphate: step 1/1. It participates in isoprenoid biosynthesis; isopentenyl diphosphate biosynthesis via DXP pathway; isopentenyl diphosphate from 1-deoxy-D-xylulose 5-phosphate: step 6/6. Catalyzes the conversion of 1-hydroxy-2-methyl-2-(E)-butenyl 4-diphosphate (HMBPP) into a mixture of isopentenyl diphosphate (IPP) and dimethylallyl diphosphate (DMAPP). Acts in the terminal step of the DOXP/MEP pathway for isoprenoid precursor biosynthesis. In Sulfurimonas denitrificans (strain ATCC 33889 / DSM 1251) (Thiomicrospira denitrificans (strain ATCC 33889 / DSM 1251)), this protein is 4-hydroxy-3-methylbut-2-enyl diphosphate reductase.